Consider the following 154-residue polypeptide: Insulin-like peptide 1 (154 aa).

The N-terminal stretch at 1–29 (MFSQHNGAAVHGLRLQSLLIAAMLTAAMA) is a signal peptide. Cystine bridges form between Cys-49-Cys-138, Cys-61-Cys-151, and Cys-137-Cys-142. Positions 72–92 (RESLLGNSDDDEDTEQEVQDD) are disordered. Residues 73 to 122 (ESLLGNSDDDEDTEQEVQDDSSMWQTLDGAGYSFSPLLTNLYGSEVLIKM) constitute a propeptide, connecting peptide. Residues 79–91 (SDDDEDTEQEVQD) are compositionally biased toward acidic residues.

The protein belongs to the insulin family. As to quaternary structure, heterodimer of a B chain and an A chain linked by two disulfide bonds.

The protein localises to the secreted. Functionally, possible ligand of InR/insulin-like receptor. The sequence is that of Insulin-like peptide 1 from Drosophila melanogaster (Fruit fly).